The primary structure comprises 120 residues: Alanine racemase (120 aa).

Catalysis depends on Tyr24, which acts as the Proton acceptor; specific for L-alanine.

It belongs to the alanine racemase family. Homodimer. The cofactor is pyridoxal 5'-phosphate.

It carries out the reaction L-alanine = D-alanine. Highly specific to D- and L-alanine and does not catalyze the racemization of other amino acids. In Penaeus monodon (Giant tiger prawn), this protein is Alanine racemase.